The sequence spans 230 residues: MYDVTEWKHVFKLDPNKEISDEQLEAICESGTDAILIGGSDNVTEDNVLQLMSKVRRFLVPCVLEISTHEMIVPGFDLYFIPTVLNSSHPDWIVGLHKDAMKEFGDLMSMEEIVPEGYVILNEECKAAKLTEANTALDIDDVRAYARVAEHLMKLPIFYLEYSGTLGDIELVKETKAVLSDTVLFYGGGIENAKQAEDFAQHADVVVVGNVIYDNFKEALKTVSAVKKSS.

Lys12 contributes to the sn-glycerol 1-phosphate binding site. 2 residues coordinate Mg(2+): Asp14 and Ser40. Sn-glycerol 1-phosphate-binding positions include 159 to 164, Gly189, and 209 to 210; these read YLEYSG and GN.

The protein belongs to the GGGP/HepGP synthase family. Group I subfamily. As to quaternary structure, homodimer. Requires Mg(2+) as cofactor.

The catalysed reaction is sn-glycerol 1-phosphate + all-trans-heptaprenyl diphosphate = 3-heptaprenyl-sn-glycero-1-phosphate + diphosphate. It participates in membrane lipid metabolism; glycerophospholipid metabolism. Its function is as follows. Prenyltransferase that catalyzes in vivo the transfer of the heptaprenyl moiety of heptaprenyl pyrophosphate (HepPP; 35 carbon atoms) to the C3 hydroxyl of sn-glycerol-1-phosphate (G1P), producing heptaprenylglyceryl phosphate (HepGP). This reaction is an ether-bond-formation step in the biosynthesis of archaea-type G1P-based membrane lipids found in Bacillales. The sequence is that of Heptaprenylglyceryl phosphate synthase from Bacillus pumilus (strain SAFR-032).